Reading from the N-terminus, the 304-residue chain is CRISPR-associated endonuclease Cas1 (304 aa).

Glutamate 148, histidine 204, and glutamate 219 together coordinate Mn(2+).

Belongs to the CRISPR-associated endonuclease Cas1 family. As to quaternary structure, homodimer, forms a heterotetramer with a Cas2 homodimer. Mg(2+) serves as cofactor. Requires Mn(2+) as cofactor.

In terms of biological role, CRISPR (clustered regularly interspaced short palindromic repeat), is an adaptive immune system that provides protection against mobile genetic elements (viruses, transposable elements and conjugative plasmids). CRISPR clusters contain spacers, sequences complementary to antecedent mobile elements, and target invading nucleic acids. CRISPR clusters are transcribed and processed into CRISPR RNA (crRNA). Acts as a dsDNA endonuclease. Involved in the integration of spacer DNA into the CRISPR cassette. This is CRISPR-associated endonuclease Cas1 from Neisseria meningitidis serogroup C (strain 8013).